The primary structure comprises 296 residues: MTIATASARARPSSLQYAKDLLLLAKPRLSGLVIVTSAGGLALAPGHVAPARAALTVLATAAVVGAANALNCWMEREIDARMRRTRDRPLPAGRVDPFTALGLGIMVPVFALPVLALVANPLTAALAFVALVTYVAVYTPMKQRSTLALLVGAVPGAIPPLMGWTAATGRLDAGGLALFALLFAWQLPHFLAVSIYLRDDYARGGLRVFSIVHGERTTRAWIAATAAALVPVSLLLVPLRVAGPSYGAVAAVLGVALAGYAFAGVGREGGRWARNFFLATILYLTLLFVALFLGAR.

9 helical membrane passes run 29-49, 54-74, 98-118, 121-141, 147-167, 175-195, 221-241, 246-266, and 275-295; these read LSGL…GHVA, ALTV…NCWM, FTAL…LALV, PLTA…YTPM, LALL…WTAA, GLAL…AVSI, WIAA…PLRV, YGAV…AGVG, and NFFL…FLGA.

The protein belongs to the UbiA prenyltransferase family. Protoheme IX farnesyltransferase subfamily.

Its subcellular location is the cell inner membrane. It catalyses the reaction heme b + (2E,6E)-farnesyl diphosphate + H2O = Fe(II)-heme o + diphosphate. It participates in porphyrin-containing compound metabolism; heme O biosynthesis; heme O from protoheme: step 1/1. In terms of biological role, converts heme B (protoheme IX) to heme O by substitution of the vinyl group on carbon 2 of heme B porphyrin ring with a hydroxyethyl farnesyl side group. This Anaeromyxobacter sp. (strain Fw109-5) protein is Protoheme IX farnesyltransferase.